Consider the following 258-residue polypeptide: MKEILITNDDGYESEGLKKLVKMLKKEFKAKITIVAPASEKSACSHSITLTKPLRFVKVGKRFYKLDDGTPADCVYLAFHALYKTRLPDLVISGINKGANVGEDITYSGTCAGAMEAALQGISAIALSQFYKKSEKELDYKNALKITKKIIQNIFDKDFPLEKKEFLNINFPAKSKIKGIKICKAGKRVYNFEAHSNINPRGVEYYWLAAANLDFEDEKNSDIVLLKKGYATITPIMLDLTAYERMKKVKKWLKANNE.

The a divalent metal cation site is built by aspartate 9, aspartate 10, serine 42, and asparagine 96.

It belongs to the SurE nucleotidase family. Requires a divalent metal cation as cofactor.

It localises to the cytoplasm. The catalysed reaction is a ribonucleoside 5'-phosphate + H2O = a ribonucleoside + phosphate. In terms of biological role, nucleotidase that shows phosphatase activity on nucleoside 5'-monophosphates. In Campylobacter jejuni subsp. doylei (strain ATCC BAA-1458 / RM4099 / 269.97), this protein is 5'-nucleotidase SurE.